The primary structure comprises 126 residues: Fluoride-specific ion channel FluC (126 aa).

Helical transmembrane passes span 5 to 25, 34 to 54, 67 to 87, and 95 to 115; these read IAVICLAACVGALMRWGFALW, WGTLAVNLIGGYCIGIALAVF, LVITGFLGTLTTFSSFSGEVV, and FGLAFGTIALHLGGSLALTWA. Positions 74 and 77 each coordinate Na(+).

It belongs to the fluoride channel Fluc/FEX (TC 1.A.43) family.

Its subcellular location is the cell inner membrane. It catalyses the reaction fluoride(in) = fluoride(out). Na(+) is not transported, but it plays an essential structural role and its presence is essential for fluoride channel function. Its function is as follows. Fluoride-specific ion channel. Important for reducing fluoride concentration in the cell, thus reducing its toxicity. The polypeptide is Fluoride-specific ion channel FluC (Paracidovorax citrulli (strain AAC00-1) (Acidovorax citrulli)).